The chain runs to 150 residues: UPF0178 protein ASA_3749 (150 aa).

This sequence belongs to the UPF0178 family.

The sequence is that of UPF0178 protein ASA_3749 from Aeromonas salmonicida (strain A449).